The sequence spans 350 residues: Protein-glutamate methylesterase/protein-glutamine glutaminase (350 aa).

One can recognise a Response regulatory domain in the interval 5-122 (RVLSVDDSAL…REGMLAYSEM (118 aa)). Position 56 is a 4-aspartylphosphate (Asp56). The region spanning 152-338 (LLSSEKLLVI…DLSQVVSQQM (187 aa)) is the CheB-type methylesterase domain. Active-site residues include Ser164, His190, and Asp286.

Belongs to the CheB family. Post-translationally, phosphorylated by CheA. Phosphorylation of the N-terminal regulatory domain activates the methylesterase activity.

It localises to the cytoplasm. The enzyme catalyses [protein]-L-glutamate 5-O-methyl ester + H2O = L-glutamyl-[protein] + methanol + H(+). The catalysed reaction is L-glutaminyl-[protein] + H2O = L-glutamyl-[protein] + NH4(+). Involved in chemotaxis. Part of a chemotaxis signal transduction system that modulates chemotaxis in response to various stimuli. Catalyzes the demethylation of specific methylglutamate residues introduced into the chemoreceptors (methyl-accepting chemotaxis proteins or MCP) by CheR. Also mediates the irreversible deamidation of specific glutamine residues to glutamic acid. The chain is Protein-glutamate methylesterase/protein-glutamine glutaminase from Enterobacter cloacae.